We begin with the raw amino-acid sequence, 490 residues long: Glutamate--tRNA ligase (490 aa).

The short motif at 12 to 22 (PSPTGTPHVGL) is the 'HIGH' region element. Residues 256–260 (KLSKR) carry the 'KMSKS' region motif. K259 serves as a coordination point for ATP.

This sequence belongs to the class-I aminoacyl-tRNA synthetase family. Glutamate--tRNA ligase type 1 subfamily. As to quaternary structure, monomer.

It is found in the cytoplasm. It carries out the reaction tRNA(Glu) + L-glutamate + ATP = L-glutamyl-tRNA(Glu) + AMP + diphosphate. In terms of biological role, catalyzes the attachment of glutamate to tRNA(Glu) in a two-step reaction: glutamate is first activated by ATP to form Glu-AMP and then transferred to the acceptor end of tRNA(Glu). This is Glutamate--tRNA ligase from Mycobacterium sp. (strain JLS).